The chain runs to 428 residues: Enolase (428 aa).

Q163 contributes to the (2R)-2-phosphoglycerate binding site. The Proton donor role is filled by E205. Residues D242, E285, and D312 each contribute to the Mg(2+) site. K337, R366, S367, and K388 together coordinate (2R)-2-phosphoglycerate. Residue K337 is the Proton acceptor of the active site.

This sequence belongs to the enolase family. Requires Mg(2+) as cofactor.

Its subcellular location is the cytoplasm. It localises to the secreted. The protein resides in the cell surface. The enzyme catalyses (2R)-2-phosphoglycerate = phosphoenolpyruvate + H2O. The protein operates within carbohydrate degradation; glycolysis; pyruvate from D-glyceraldehyde 3-phosphate: step 4/5. Its function is as follows. Catalyzes the reversible conversion of 2-phosphoglycerate (2-PG) into phosphoenolpyruvate (PEP). It is essential for the degradation of carbohydrates via glycolysis. The protein is Enolase of Neisseria meningitidis serogroup C (strain 053442).